We begin with the raw amino-acid sequence, 707 residues long: Zinc finger CCHC domain-containing protein 8 (707 aa).

Position 2 is an N-acetylalanine (Ala-2). Residues 16 to 44 (FDHPEESIPKPVHTRFKDDDGDEEDENGV) form a disordered region. The segment covering 34-43 (DDGDEEDENG) has biased composition (acidic residues). Positions 45–80 (GDAELRERLRQCEETIEQLRAENQELKRKLNILTRP) form a coiled coil. The CCHC-type zinc finger occupies 227-244 (PHCFNCGSEEHQMKDCPM). RBM7 binding stretches follow at residues 286-299 (FKPG…QDAL) and 309-324 (FIYR…GWLK). At Thr-342 the chain carries Phosphothreonine. Disordered stretches follow at residues 409–518 (APGV…LTLE), 531–607 (LEQA…TSLC), and 641–660 (QKLF…HSPI). Residue Lys-413 forms a Glycyl lysine isopeptide (Lys-Gly) (interchain with G-Cter in SUMO2) linkage. The span at 456-465 (SQSSESFQFQ) shows a compositional bias: low complexity. Pro residues predominate over residues 466 to 496 (PPLPPDTPPLPRGTPPPVFTPPLPKGTPPLT). 3 positions are modified to phosphothreonine: Thr-472, Thr-479, and Thr-485. Thr-492 is modified (phosphothreonine; by GSK3). The stretch at 516-539 (TLEELEEQQRRIWAALEQAESVNS) forms a coiled coil. The span at 549–559 (LTGNSVASSPC) shows a compositional bias: polar residues. Phosphothreonine is present on Thr-577. Position 598 is a phosphoserine (Ser-598). Residues 598 to 607 (SPDSEVTSLC) are compositionally biased toward polar residues. Position 648 is a phosphothreonine (Thr-648). Phosphoserine occurs at positions 649, 658, and 695. Positions 659–707 (PIPDMSKFATGITPFEFENMAESTGMYLRIRSLLKNSPRNQQKNKKASE) are MTREX binding.

It belongs to the ZCCHC8 family. In terms of assembly, component of a nuclear TRAMP-like complex, an ATP-dependent exosome regulatory complex consisting of a helicase (MTREX), an oligadenylate polymerase (TENT4B or TENT4A), and a substrate specific RNA-binding factor (ZCCHC7 or ZCCHC8). Several TRAMP-like complexes exist with specific compositions and are associated with nuclear, or nucleolar RNA exosomes. Identified in the spliceosome C complex. Component of the nuclear exosome targeting (NEXT) complex composed of MTREX, ZCCHC8, and RBM7 that directs a subset of non-coding short-lived RNAs for exosomal degradation. Interacts with proteins involved in RNA processing and degradation such as MTREX and RBM7; interaction with MTREX enhances MTREX RNA helicase activity and bridges between RBM7 and MTREX. Interacts with TERC, the telomerase RNA component. Post-translationally, phosphorylation at Thr-492 by GSK3 is triggered in cells entering mitosis; this phosphorylation is greatly enhanced by nocodazole treatment, but reduced by lithium.

The protein resides in the nucleus. Its subcellular location is the nucleoplasm. Scaffolding subunit of the trimeric nuclear exosome targeting (NEXT) complex that is involved in the surveillance and turnover of aberrant transcripts and non-coding RNAs. NEXT functions as an RNA exosome cofactor that directs a subset of non-coding short-lived RNAs for exosomal degradation. May be involved in pre-mRNA splicing. It is required for 3'-end maturation of telomerase RNA component (TERC), TERC 3'-end targeting to the nuclear RNA exosome, and for telomerase function. The chain is Zinc finger CCHC domain-containing protein 8 (ZCCHC8) from Homo sapiens (Human).